Here is a 544-residue protein sequence, read N- to C-terminus: ATP-dependent RNA helicase HAS1 (544 aa).

Positions 1-10 (MSSTKPPTTT) are enriched in low complexity. A disordered region spans residues 1-59 (MSSTKPPTTTNKRKRTSNAHDEAPAKRVPEASSSKVTLDDSQPAPATSSDAVLGARSAP). The segment covering 18–29 (NAHDEAPAKRVP) has biased composition (basic and acidic residues). Residues 31-50 (ASSSKVTLDDSQPAPATSSD) are compositionally biased toward polar residues. Residues 66-94 (VPFSTLNLSPPTTAAIERMGFETMTEVQA) carry the Q motif motif. In terms of domain architecture, Helicase ATP-binding spans 97-273 (IPPLLAGKDV…RISLRPGPLY (177 aa)). Position 110 to 117 (110 to 117 (ARTGSGKT)) interacts with ATP. Residues 220-223 (DEAD) carry the DEAD box motif. In terms of domain architecture, Helicase C-terminal spans 287–456 (MLEQGYVVCE…DVQKQLESLI (170 aa)). Residues 299–315 (QRFMLLFTFLKKNLKKK) carry the Bipartite nuclear localization signal motif. The interval 513–544 (GSVKAKKSRDEDESSDDDGQPKKAYYRNRGRK) is disordered.

It belongs to the DEAD box helicase family. DDX18/HAS1 subfamily. In terms of assembly, associates in the nucleolus with the 60S and pre-60S ribosomal subunits.

It is found in the nucleus. Its subcellular location is the nucleolus. The enzyme catalyses ATP + H2O = ADP + phosphate + H(+). Functionally, ATP-dependent RNA helicase involved in 40S ribosomal subunit biogenesis. Required for the processing and cleavage of 35S pre-rRNA at sites A0, A1, and A2, leading to mature 18S rRNA. This is ATP-dependent RNA helicase HAS1 (HAS1) from Cryptococcus neoformans var. neoformans serotype D (strain JEC21 / ATCC MYA-565) (Filobasidiella neoformans).